The chain runs to 150 residues: Ventricular natriuretic peptide (150 aa).

The N-terminal stretch at 1 to 21 is a signal peptide; that stretch reads MAKSGIYLGCFILILIQNMVA. The segment at 52 to 75 is disordered; that stretch reads EEPEVYPESEDMKMDAEEEDAGIS. Cysteines 120 and 136 form a disulfide.

The protein belongs to the natriuretic peptide family. Heart ventricle, and to a lower extent in heart atrium.

The protein resides in the secreted. Its function is as follows. Exhibits natriuretic and vasodepressor activity. This is Ventricular natriuretic peptide (vnp) from Anguilla japonica (Japanese eel).